Consider the following 436-residue polypeptide: Xylose isomerase (436 aa).

D306 and D308 together coordinate Mg(2+).

This sequence belongs to the xylose isomerase family. Homotetramer. Mg(2+) is required as a cofactor.

It is found in the cytoplasm. The enzyme catalyses alpha-D-xylose = alpha-D-xylulofuranose. This is Xylose isomerase from Rhizobium rhizogenes (strain K84 / ATCC BAA-868) (Agrobacterium radiobacter).